A 90-amino-acid polypeptide reads, in one-letter code: Probable Fe(2+)-trafficking protein (90 aa).

It belongs to the Fe(2+)-trafficking protein family.

In terms of biological role, could be a mediator in iron transactions between iron acquisition and iron-requiring processes, such as synthesis and/or repair of Fe-S clusters in biosynthetic enzymes. The polypeptide is Probable Fe(2+)-trafficking protein (Nitrosococcus oceani (strain ATCC 19707 / BCRC 17464 / JCM 30415 / NCIMB 11848 / C-107)).